The primary structure comprises 470 residues: Annexin C1 (470 aa).

The interval M1–G143 is disordered. Residues Q15–A34 are compositionally biased toward low complexity. The span at P82–A92 shows a compositional bias: pro residues. Low complexity-rich tracts occupy residues P93–P110 and G128–P138. Annexin repeat units follow at residues Y161–L232, G233–S304, Q316–R388, and D395–E468.

It belongs to the annexin family.

Its function is as follows. Does not appear to play a major role in virulence. May play a role in titan cell formation. The protein is Annexin C1 of Cryptococcus neoformans var. grubii serotype A (strain H99 / ATCC 208821 / CBS 10515 / FGSC 9487) (Filobasidiella neoformans var. grubii).